Consider the following 693-residue polypeptide: Homeobox protein caupolican (693 aa).

Disordered regions lie at residues 20-104 (TANT…PSRG), 288-331 (NKMT…PGNQ), 387-453 (AQSH…DCGI), 480-538 (YLGQ…PLSM), 561-627 (MHLP…SMHS), and 648-693 (YGHG…RSGS). Residues 41–59 (ASLSPSGGSTATGLTAGPL) show a composition bias toward low complexity. Positions 226–288 (LAARRKNATR…NARRRLKKEN (63 aa)) form a DNA-binding region, homeobox; TALE-type. 2 stretches are compositionally biased toward basic and acidic residues: residues 288–298 (NKMTWEPKNKT) and 308–317 (DDEKEKDAGD). Composition is skewed to low complexity over residues 397–419 (HPQQ…QLQH) and 493–515 (QQLP…QQQQ). A compositionally biased stretch (basic residues) spans 516–527 (QHHHHPHHHHPH). Low complexity predominate over residues 609–627 (SSGGSSSSSGSSHSSSMHS). The segment covering 651–675 (GHSHGHGHGHGHGLGHGHGLGHGHG) has biased composition (basic residues).

Belongs to the TALE/IRO homeobox family.

The protein resides in the nucleus. Controls proneural and vein forming genes. Positive transcriptional controller of ac-sc (achaete-scute). May act as an activator that interacts with the transcriptional complex assembled on the ac and sc promoters and participates in transcription initiation. The polypeptide is Homeobox protein caupolican (caup) (Drosophila melanogaster (Fruit fly)).